Consider the following 410-residue polypeptide: uncharacterized protein (410 aa).

11–39 (VLVIGGGPSGTALSAELAARGLDVQQLAP) contacts NAD(+).

It belongs to the lycopene cyclase family.

This is an uncharacterized protein from Deinococcus radiodurans (strain ATCC 13939 / DSM 20539 / JCM 16871 / CCUG 27074 / LMG 4051 / NBRC 15346 / NCIMB 9279 / VKM B-1422 / R1).